The following is a 161-amino-acid chain: Regulator of ribonuclease activity A (161 aa).

It belongs to the RraA family. In terms of assembly, homotrimer. Binds to both RNA-binding sites in the C-terminal region of Rne and to RhlB.

It localises to the cytoplasm. Functionally, globally modulates RNA abundance by binding to RNase E (Rne) and regulating its endonucleolytic activity. Can modulate Rne action in a substrate-dependent manner by altering the composition of the degradosome. Modulates RNA-binding and helicase activities of the degradosome. The sequence is that of Regulator of ribonuclease activity A from Photobacterium profundum (strain SS9).